Here is a 241-residue protein sequence, read N- to C-terminus: Tryptophan synthase alpha chain (241 aa).

Residues E31 and D42 each act as proton acceptor in the active site.

This sequence belongs to the TrpA family. Tetramer of two alpha and two beta chains.

It catalyses the reaction (1S,2R)-1-C-(indol-3-yl)glycerol 3-phosphate + L-serine = D-glyceraldehyde 3-phosphate + L-tryptophan + H2O. Its pathway is amino-acid biosynthesis; L-tryptophan biosynthesis; L-tryptophan from chorismate: step 5/5. Its function is as follows. The alpha subunit is responsible for the aldol cleavage of indoleglycerol phosphate to indole and glyceraldehyde 3-phosphate. The chain is Tryptophan synthase alpha chain from Staphylococcus saprophyticus subsp. saprophyticus (strain ATCC 15305 / DSM 20229 / NCIMB 8711 / NCTC 7292 / S-41).